A 251-amino-acid chain; its full sequence is Imidazole glycerol phosphate synthase subunit HisF (251 aa).

Active-site residues include Asp11 and Asp130.

It belongs to the HisA/HisF family. Heterodimer of HisH and HisF.

The protein localises to the cytoplasm. The catalysed reaction is 5-[(5-phospho-1-deoxy-D-ribulos-1-ylimino)methylamino]-1-(5-phospho-beta-D-ribosyl)imidazole-4-carboxamide + L-glutamine = D-erythro-1-(imidazol-4-yl)glycerol 3-phosphate + 5-amino-1-(5-phospho-beta-D-ribosyl)imidazole-4-carboxamide + L-glutamate + H(+). It functions in the pathway amino-acid biosynthesis; L-histidine biosynthesis; L-histidine from 5-phospho-alpha-D-ribose 1-diphosphate: step 5/9. IGPS catalyzes the conversion of PRFAR and glutamine to IGP, AICAR and glutamate. The HisF subunit catalyzes the cyclization activity that produces IGP and AICAR from PRFAR using the ammonia provided by the HisH subunit. The protein is Imidazole glycerol phosphate synthase subunit HisF of Cytophaga hutchinsonii (strain ATCC 33406 / DSM 1761 / CIP 103989 / NBRC 15051 / NCIMB 9469 / D465).